Reading from the N-terminus, the 348-residue chain is Rhodopsin (348 aa).

Methionine 1 bears the N-acetylmethionine mark. The Extracellular segment spans residues 1–36 (MNGTEGLNFYVPFSNKTGVVRSPFEYPQYYLAEPWQ). Asparagine 2 and asparagine 15 each carry an N-linked (GlcNAc...) asparagine glycan. The chain crosses the membrane as a helical span at residues 37-61 (FSVLAAYMFLLIVLGFPINFLTLYV). Residues 62–73 (TVQHKKLRTPLN) lie on the Cytoplasmic side of the membrane. The helical transmembrane segment at 74-99 (YILLNLAVANLFMVFGGFTTTLYTSL) threads the bilayer. Residues 100 to 111 (HAYFVFGPTGCN) lie on the Extracellular side of the membrane. Residues cysteine 110 and cysteine 187 are joined by a disulfide bond. The helical transmembrane segment at 112 to 133 (LEGFFATLGGEIALWSLVVLAI) threads the bilayer. The short motif at 134 to 136 (ERY) is the 'Ionic lock' involved in activated form stabilization element. At 134 to 152 (ERYVVVCKPMSNFRFGENH) the chain is on the cytoplasmic side. Residues 153–173 (AIMGLALTWIMAMACAAAPLV) form a helical membrane-spanning segment. The Extracellular portion of the chain corresponds to 174–202 (GWSRYIPEGMQCSCGIDYYTSRQEVNNES). Residue glutamate 201 participates in Zn(2+) binding. Residues 203-227 (FVIYMFVVHFTIPLVIIFFCYGQLV) form a helical membrane-spanning segment. At 228–252 (FTVKEAAAQQQESATTQKAEKEVTR) the chain is on the cytoplasmic side. The helical transmembrane segment at 253–274 (MVIIMVVAFLICWVPYASVAFY) threads the bilayer. Over 275 to 286 (IFTHQGSDFGPI) the chain is Extracellular. Glutamine 279 is a Zn(2+) binding site. A helical transmembrane segment spans residues 287–306 (FMTIPSFFAKSSSIYNPVIY). Residue lysine 296 is modified to N6-(retinylidene)lysine. Residues 307–348 (IMMNKQFRNCMLTTLCCGRNPLGDDEASTTASKTETSQVAPA) lie on the Cytoplasmic side of the membrane. 2 S-palmitoyl cysteine lipidation sites follow: cysteine 322 and cysteine 323. Phosphoserine is present on serine 334. Phosphothreonine is present on residues threonine 335 and threonine 336. Position 338 is a phosphoserine (serine 338). Phosphothreonine occurs at positions 340 and 342. The residue at position 343 (serine 343) is a Phosphoserine.

This sequence belongs to the G-protein coupled receptor 1 family. Opsin subfamily. Homodimer. May form a complex composed of RHO, GRK1 and RCVRN in a Ca(2+)-dependent manner; RCVRN prevents the interaction between GRK1 and RHO. Interacts with GRK1. Interacts (phosphorylated form) with SAG. Interacts with GNAT1. Interacts with GNAT3. SAG and G-proteins compete for a common binding site. Interacts with PRCD; the interaction promotes PRCD stability. Forms a complex with ASAP1 and ARF4. Forms a complex with ASAP1, RAB11A, Rabin8/RAB3IP, ARF4 and RAB11FIP3; the complex regulates Golgi-to-cilia rhodopsin/RHO transport in photoreceptors. Post-translationally, contains one covalently linked retinal chromophore. Upon light absorption, the covalently bound 11-cis-retinal is converted to all-trans-retinal. After hydrolysis of the Schiff base and release of the covalently bound all-trans-retinal, active rhodopsin is regenerated by binding of a fresh molecule of 11-cis-retinal.

Its subcellular location is the membrane. It localises to the cell projection. The protein localises to the cilium. The protein resides in the photoreceptor outer segment. Its function is as follows. Photoreceptor required for image-forming vision at low light intensity. Light-induced isomerization of 11-cis to all-trans retinal triggers a conformational change that activates signaling via G-proteins. Signaling mediates the activation of phospholipase C. Subsequent receptor phosphorylation mediates displacement of the bound G-protein alpha subunit by arrestin and terminates signaling. The sequence is that of Rhodopsin (RHO) from Tursiops truncatus (Atlantic bottle-nosed dolphin).